Consider the following 530-residue polypeptide: Cytochrome P450 monooxygenase sttB (530 aa).

A glycan (N-linked (GlcNAc...) asparagine) is linked at N5. Residues 24–44 (LPILTVALLTGIASAVYINVS) form a helical membrane-spanning segment. Residue N230 is glycosylated (N-linked (GlcNAc...) asparagine).

This sequence belongs to the cytochrome P450 family. Requires heme as cofactor.

Its subcellular location is the membrane. It carries out the reaction preaspterpenacid acid I + reduced [NADPH--hemoprotein reductase] + O2 = preaspterpenacid acid II + oxidized [NADPH--hemoprotein reductase] + H2O + H(+). It functions in the pathway secondary metabolite biosynthesis; terpenoid biosynthesis. In terms of biological role, cytochrome P450 monooxygenase; part of the gene cluster that mediates the biosynthesis of aspterpenacids. Performs the C22-oxidative modification of the terpene synthase sttA product preaspterpenacid I to produce preaspterpenacid II. It has still to be determined how preaspterpenacid II is further modified to produce aspterpenacids. In Aspergillus terreus (strain NIH 2624 / FGSC A1156), this protein is Cytochrome P450 monooxygenase sttB.